Here is a 462-residue protein sequence, read N- to C-terminus: Zinc transporter 6-B (462 aa).

Residues 1–33 (MGTIYLFRKTQRSLLGKLTQEFRLVTADRRSWK) are Cytoplasmic-facing. Residues 34–54 (ILLFGAINVVCTGFLLTWCSS) traverse the membrane as a helical segment. The Extracellular segment spans residues 55–64 (TNSMALTAYT). A helical membrane pass occupies residues 65 to 85 (YLTIFDLFSLITSLISYWVMM). At 86–98 (KKPSPTYSFGFER) the chain is on the cytoplasmic side. The helical transmembrane segment at 99–119 (LEVLAVFASTVLAQLGALFIL) threads the bilayer. At 120 to 134 (KESAERFLEQPEIHT) the chain is on the extracellular side. The helical transmembrane segment at 135-155 (GRLLVGTFVALFFNLFTMLSI) threads the bilayer. The Cytoplasmic segment spans residues 156 to 200 (RNKPFAYVSEAASTSWLQEHVADLSRSLCGVIPGLSSIFLPRMNP). Residues 201-221 (FVLIDIAGALALCITYMLIEI) traverse the membrane as a helical segment. The Extracellular segment spans residues 222 to 223 (NN). A helical transmembrane segment spans residues 224 to 244 (YFAVDTASAIAIAVMTFGTMY). The Cytoplasmic portion of the chain corresponds to 245–462 (PMSVYSGKVL…TPGQFTQFRQ (218 aa)).

This sequence belongs to the cation diffusion facilitator (CDF) transporter (TC 2.A.4) family. SLC30A subfamily. Heterodimer with SLC30A5; form a functional zinc ion transmembrane transporter.

It localises to the golgi apparatus. It is found in the trans-Golgi network membrane. Its function is as follows. Has probably no intrinsic transporter activity but together with SLC30A5 forms a functional zinc ion:proton antiporter heterodimer, mediating zinc entry into the lumen of organelles along the secretory pathway. As part of that zinc ion:proton antiporter, contributes to zinc ion homeostasis within the early secretory pathway and regulates the activation and folding of enzymes like alkaline phosphatases and enzymes involved in phosphatidylinositol glycan anchor biosynthesis. This chain is Zinc transporter 6-B (slc30a6-b), found in Xenopus laevis (African clawed frog).